A 296-amino-acid chain; its full sequence is Chronophin (296 aa).

Asp25 functions as the Nucleophile in the catalytic mechanism. Residues Asp25 and Asn27 each coordinate Mg(2+). The Proton donor role is filled by Asn27. Substrate-binding positions include 58 to 60 (SNN), His182, and Lys213. Asp238 is a Mg(2+) binding site.

Belongs to the HAD-like hydrolase superfamily. As to quaternary structure, homodimer. Mg(2+) serves as cofactor. As to expression, detected in brain (at protein level).

The protein resides in the cytoplasm. Its subcellular location is the cytosol. It is found in the cytoskeleton. It localises to the cell projection. The protein localises to the ruffle membrane. The protein resides in the lamellipodium membrane. Its subcellular location is the cell membrane. It carries out the reaction pyridoxal 5'-phosphate + H2O = pyridoxal + phosphate. The catalysed reaction is pyridoxine 5'-phosphate + H2O = pyridoxine + phosphate. It catalyses the reaction pyridoxamine + phosphate = pyridoxamine 5'-phosphate + H2O. The enzyme catalyses O-phospho-L-seryl-[protein] + H2O = L-seryl-[protein] + phosphate. Its function is as follows. Functions as a pyridoxal phosphate (PLP) phosphatase, which also catalyzes the dephosphorylation of pyridoxine 5'-phosphate (PNP) and pyridoxamine 5'-phosphate (PMP), with order of substrate preference PLP &gt; PNP &gt; PMP and therefore plays a role in vitamin B6 metabolism. Also functions as a protein serine phosphatase that specifically dephosphorylates 'Ser-3' in proteins of the actin-depolymerizing factor (ADF)/cofilin family like CFL1 and DSTN. Thereby, regulates cofilin-dependent actin cytoskeleton reorganization, being required for normal progress through mitosis and normal cytokinesis. Does not dephosphorylate phosphothreonines in LIMK1. Does not dephosphorylate peptides containing phosphotyrosine. This Bos taurus (Bovine) protein is Chronophin.